We begin with the raw amino-acid sequence, 364 residues long: Autophagy-related protein 14 (364 aa).

A cysteine repeats region spans residues 5–20; it reads CPICETQSHVFYCAHC. The stretch at 38–114 forms a coiled coil; the sequence is LGKINNALRN…QDRRIKEKSR (77 aa).

This sequence belongs to the ATG14 family. In terms of assembly, component of the autophagy-specific VPS34 PI3-kinase complex I composed of VPS15, VPS30, VPS34, ATG14 and ATG38. Interacts directly with ATG38.

The protein localises to the preautophagosomal structure membrane. The protein resides in the vacuole membrane. Its function is as follows. Required for cytoplasm to vacuole transport (Cvt) and autophagy as a part of the autophagy-specific VPS34 PI3-kinase complex I. This complex is essential to recruit the ATG8-phosphatidylinositol conjugate and the ATG12-ATG5 conjugate to the pre-autophagosomal structure. ATG14 mediates the specific binding of the VPS34 PI3-kinase complex I to the preautophagosomal structure (PAS). Required for survival and/or proliferation in kidneys and in brain. The protein is Autophagy-related protein 14 of Candida glabrata (strain ATCC 2001 / BCRC 20586 / JCM 3761 / NBRC 0622 / NRRL Y-65 / CBS 138) (Yeast).